We begin with the raw amino-acid sequence, 351 residues long: D-alanine--D-alanine ligase (351 aa).

Positions 135–343 (NQIFLQSGQK…MEEVFADLIE (209 aa)) constitute an ATP-grasp domain. ATP is bound at residue 167 to 222 (LMSLGFPQFLKPVEGGSSVSTYKITNQEQLSRQLALIFESDSKVMSQSFLAGTEVS). Residues Asp-298, Glu-310, and Asn-312 each contribute to the Mg(2+) site.

It belongs to the D-alanine--D-alanine ligase family. Requires Mg(2+) as cofactor. Mn(2+) serves as cofactor.

The protein resides in the cytoplasm. The catalysed reaction is 2 D-alanine + ATP = D-alanyl-D-alanine + ADP + phosphate + H(+). It participates in cell wall biogenesis; peptidoglycan biosynthesis. In terms of biological role, cell wall formation. This chain is D-alanine--D-alanine ligase, found in Leptospira borgpetersenii serovar Hardjo-bovis (strain JB197).